The chain runs to 62 residues: MAVPRANTSKARTRRRRGVNMRLQAPNLVECSGCGNLIMPHHVCPKCGFYKGKQVINPDKLD.

It belongs to the bacterial ribosomal protein bL32 family.

This Treponema denticola (strain ATCC 35405 / DSM 14222 / CIP 103919 / JCM 8153 / KCTC 15104) protein is Large ribosomal subunit protein bL32.